We begin with the raw amino-acid sequence, 447 residues long: 1-aminocyclopropane-1-carboxylate synthase 7 (447 aa).

The substrate site is built by Glu61 and Tyr100. Lys285 is modified (N6-(pyridoxal phosphate)lysine).

This sequence belongs to the class-I pyridoxal-phosphate-dependent aminotransferase family. As to quaternary structure, homodimer and heterodimer. In vivo, the relevance of heterodimerization with other ACS enzymes is however unsure. Interacts with XBAT32. Pyridoxal 5'-phosphate is required as a cofactor. In terms of processing, ubiquitinated by XBAT32. Ubiquitination probably leads to its subsequent degradation, thus controlling ethylene production. In terms of tissue distribution, expressed in roots.

It carries out the reaction S-adenosyl-L-methionine = 1-aminocyclopropane-1-carboxylate + S-methyl-5'-thioadenosine + H(+). It functions in the pathway alkene biosynthesis; ethylene biosynthesis via S-adenosyl-L-methionine; ethylene from S-adenosyl-L-methionine: step 1/2. Its function is as follows. 1-aminocyclopropane-1-carboxylate synthase (ACS) enzymes catalyze the conversion of S-adenosyl-L-methionine (SAM) into 1-aminocyclopropane-1-carboxylate (ACC), a direct precursor of ethylene. This chain is 1-aminocyclopropane-1-carboxylate synthase 7 (ACS7), found in Arabidopsis thaliana (Mouse-ear cress).